The primary structure comprises 189 residues: CDP-archaeol synthase (189 aa).

A run of 5 helical transmembrane segments spans residues 6–26 (VAIA…AVLA), 71–91 (GVVL…TVGV), 96–116 (IAAA…ASFL), 125–145 (GAAF…ALTA), and 162–184 (VAIF…AFGL).

This sequence belongs to the CDP-archaeol synthase family. Mg(2+) serves as cofactor.

It is found in the cell membrane. The catalysed reaction is 2,3-bis-O-(geranylgeranyl)-sn-glycerol 1-phosphate + CTP + H(+) = CDP-2,3-bis-O-(geranylgeranyl)-sn-glycerol + diphosphate. Its pathway is membrane lipid metabolism; glycerophospholipid metabolism. Functionally, catalyzes the formation of CDP-2,3-bis-(O-geranylgeranyl)-sn-glycerol (CDP-archaeol) from 2,3-bis-(O-geranylgeranyl)-sn-glycerol 1-phosphate (DGGGP) and CTP. This reaction is the third ether-bond-formation step in the biosynthesis of archaeal membrane lipids. This is CDP-archaeol synthase from Natronomonas pharaonis (strain ATCC 35678 / DSM 2160 / CIP 103997 / JCM 8858 / NBRC 14720 / NCIMB 2260 / Gabara) (Halobacterium pharaonis).